A 318-amino-acid chain; its full sequence is Ferric enterobactin-binding periplasmic protein FepB (318 aa).

Positions 1 to 26 (MRLAPLYRNALLLTGLLLSGIAAVQA) are cleaved as a signal peptide. One can recognise a Fe/B12 periplasmic-binding domain in the interval 48 to 318 (RIVSTSVTLT…QVLDRLKALF (271 aa)).

Belongs to the bacterial solute-binding protein 8 family. In terms of assembly, the complex is composed of two ATP-binding proteins (FepC), two transmembrane proteins (FepD and FepG) and a solute-binding protein (FepB).

It localises to the periplasm. In terms of biological role, part of the ABC transporter complex FepBDGC involved in ferric enterobactin uptake. Binds ferric enterobactin. This is Ferric enterobactin-binding periplasmic protein FepB (fepB) from Escherichia coli O6:H1 (strain CFT073 / ATCC 700928 / UPEC).